The sequence spans 270 residues: Oxidoreductase claK (270 aa).

This sequence belongs to the avfA family.

It functions in the pathway pigment biosynthesis. In terms of biological role, oxidoreductase; part of the gene cluster that mediates the biosynthesis of the bianthraquinone cladofulvin, a conidial pigment not required for virulence but that plays a role in fitness and resistance to environmental stresses including UV light and low-temperature stress. The pathway begins with the synthesis of atrochrysone thioester by the polyketide synthase (PKS) claG. The atrochrysone carboxyl ACP thioesterase claF then breaks the thioester bond and releases the atrochrysone carboxylic acid from claG. This compound is decarboxylated by claH to yield emodin, which is further converted to chrysophanol hydroquinone by the reductase claC and the dehydratase claB. The cytochrome monooxygenase P450 claM then catalyzes the dimerization of nataloe-emodin to cladofulvin. The sequence is that of Oxidoreductase claK from Passalora fulva (Tomato leaf mold).